The sequence spans 212 residues: MSSLTGKLIVIEGLEGAGKSTAVNLVVELLSQKKISTITTREPGGTRIGEILRSIIKNPEYNNVLDDRSELLLLYAARIQLIEQVIKPALNEGQWVIADRFELSTLAYQGGGRKMDMRVINELSNFCLKGFKPDLTLYLDINPELGMIRAKSRGKFDRIEQESIEFFHRIHDTYHILVKQNPEIMMIDANRPLEDVQSSIQSVIEEFIEHNL.

13–20 (GLEGAGKS) provides a ligand contact to ATP.

This sequence belongs to the thymidylate kinase family.

The enzyme catalyses dTMP + ATP = dTDP + ADP. Functionally, phosphorylation of dTMP to form dTDP in both de novo and salvage pathways of dTTP synthesis. This Legionella pneumophila (strain Corby) protein is Thymidylate kinase.